The sequence spans 273 residues: Dermonecrotic toxin LsaSicTox-alphaIB1aiii (273 aa).

The active site involves H5. Positions 25 and 27 each coordinate Mg(2+). The active-site Nucleophile is the H41. 2 disulfide bridges follow: C45-C51 and C47-C190. D85 contributes to the Mg(2+) binding site.

It belongs to the arthropod phospholipase D family. Class II subfamily. It depends on Mg(2+) as a cofactor. In terms of tissue distribution, expressed by the venom gland.

The protein resides in the secreted. The catalysed reaction is an N-(acyl)-sphingosylphosphocholine = an N-(acyl)-sphingosyl-1,3-cyclic phosphate + choline. The enzyme catalyses an N-(acyl)-sphingosylphosphoethanolamine = an N-(acyl)-sphingosyl-1,3-cyclic phosphate + ethanolamine. It catalyses the reaction a 1-acyl-sn-glycero-3-phosphocholine = a 1-acyl-sn-glycero-2,3-cyclic phosphate + choline. It carries out the reaction a 1-acyl-sn-glycero-3-phosphoethanolamine = a 1-acyl-sn-glycero-2,3-cyclic phosphate + ethanolamine. Dermonecrotic toxins cleave the phosphodiester linkage between the phosphate and headgroup of certain phospholipids (sphingolipid and lysolipid substrates), forming an alcohol (often choline) and a cyclic phosphate. This toxin acts on sphingomyelin (SM). It may also act on ceramide phosphoethanolamine (CPE), lysophosphatidylcholine (LPC) and lysophosphatidylethanolamine (LPE), but not on lysophosphatidylserine (LPS), and lysophosphatidylglycerol (LPG). It acts by transphosphatidylation, releasing exclusively cyclic phosphate products as second products. Induces dermonecrosis, hemolysis, increased vascular permeability, edema, inflammatory response, and platelet aggregation. This Loxosceles sabina (Tucson recluse spider) protein is Dermonecrotic toxin LsaSicTox-alphaIB1aiii.